The sequence spans 189 residues: Holliday junction branch migration complex subunit RuvA (189 aa).

The tract at residues 1 to 63 (MIYAMYGVLE…DDEISLYGFS (63 aa)) is domain I. The domain II stretch occupies residues 64 to 135 (DVLKLKLFEK…ELKDSMKEFD (72 aa)). Positions 135–139 (DVTLT) are flexible linker. The interval 140 to 189 (EKDKKILEAIEALVTLGFSRNQSKKAVTQILKKDDSLDDIIKKALKFLSR) is domain III.

This sequence belongs to the RuvA family. As to quaternary structure, homotetramer. Forms an RuvA(8)-RuvB(12)-Holliday junction (HJ) complex. HJ DNA is sandwiched between 2 RuvA tetramers; dsDNA enters through RuvA and exits via RuvB. An RuvB hexamer assembles on each DNA strand where it exits the tetramer. Each RuvB hexamer is contacted by two RuvA subunits (via domain III) on 2 adjacent RuvB subunits; this complex drives branch migration. In the full resolvosome a probable DNA-RuvA(4)-RuvB(12)-RuvC(2) complex forms which resolves the HJ.

The protein localises to the cytoplasm. The RuvA-RuvB-RuvC complex processes Holliday junction (HJ) DNA during genetic recombination and DNA repair, while the RuvA-RuvB complex plays an important role in the rescue of blocked DNA replication forks via replication fork reversal (RFR). RuvA specifically binds to HJ cruciform DNA, conferring on it an open structure. The RuvB hexamer acts as an ATP-dependent pump, pulling dsDNA into and through the RuvAB complex. HJ branch migration allows RuvC to scan DNA until it finds its consensus sequence, where it cleaves and resolves the cruciform DNA. This Thermosipho melanesiensis (strain DSM 12029 / CIP 104789 / BI429) protein is Holliday junction branch migration complex subunit RuvA.